The following is a 171-amino-acid chain: Large ribosomal subunit protein bL17 (171 aa).

The tract at residues 130 to 171 is disordered; the sequence is PGYKKSKGKKATKAKGKKAKATPAAEAAAAATTEAAPAEEKK. Basic residues predominate over residues 133-149; sequence KKSKGKKATKAKGKKAK. Residues 150–165 are compositionally biased toward low complexity; the sequence is ATPAAEAAAAATTEAA.

This sequence belongs to the bacterial ribosomal protein bL17 family. In terms of assembly, part of the 50S ribosomal subunit. Contacts protein L32.

This chain is Large ribosomal subunit protein bL17, found in Opitutus terrae (strain DSM 11246 / JCM 15787 / PB90-1).